Reading from the N-terminus, the 232-residue chain is 2-C-methyl-D-erythritol 4-phosphate cytidylyltransferase (232 aa).

The protein belongs to the IspD/TarI cytidylyltransferase family. IspD subfamily.

The catalysed reaction is 2-C-methyl-D-erythritol 4-phosphate + CTP + H(+) = 4-CDP-2-C-methyl-D-erythritol + diphosphate. It participates in isoprenoid biosynthesis; isopentenyl diphosphate biosynthesis via DXP pathway; isopentenyl diphosphate from 1-deoxy-D-xylulose 5-phosphate: step 2/6. Its function is as follows. Catalyzes the formation of 4-diphosphocytidyl-2-C-methyl-D-erythritol from CTP and 2-C-methyl-D-erythritol 4-phosphate (MEP). This chain is 2-C-methyl-D-erythritol 4-phosphate cytidylyltransferase, found in Synechococcus sp. (strain ATCC 27144 / PCC 6301 / SAUG 1402/1) (Anacystis nidulans).